We begin with the raw amino-acid sequence, 449 residues long: Glucose-6-phosphate isomerase (449 aa).

E291 (proton donor) is an active-site residue. Residues H312 and K426 contribute to the active site.

The protein belongs to the GPI family.

Its subcellular location is the cytoplasm. The catalysed reaction is alpha-D-glucose 6-phosphate = beta-D-fructose 6-phosphate. Its pathway is carbohydrate biosynthesis; gluconeogenesis. It participates in carbohydrate degradation; glycolysis; D-glyceraldehyde 3-phosphate and glycerone phosphate from D-glucose: step 2/4. Functionally, catalyzes the reversible isomerization of glucose-6-phosphate to fructose-6-phosphate. The sequence is that of Glucose-6-phosphate isomerase from Streptococcus gordonii (strain Challis / ATCC 35105 / BCRC 15272 / CH1 / DL1 / V288).